Reading from the N-terminus, the 331-residue chain is UBX domain-containing protein 2B (331 aa).

Disordered stretches follow at residues 1–26 and 40–65; these read MAEGGGPEPGEQERRSSGPRPPSARD and KCKSSKSNRPKATVFKSPRTPPQRFY. A2 bears the N-acetylalanine mark. Phosphoserine is present on S56. A Phosphothreonine modification is found at T59. Position 66 is a phosphoserine (S66). Positions 141–206 constitute an SEP domain; sequence DVQILLKLWS…MEDHQDQEYI (66 aa). Phosphoserine is present on residues S231, S234, and S235. The UBX domain occupies 252–329; it reads DSVPTTKIQI…DILNTVLLQQ (78 aa).

The protein belongs to the NSFL1C family. Interacts with VCP. Does not bind ubiquitin.

The protein localises to the nucleus. The protein resides in the cytoplasm. Its subcellular location is the cytosol. It is found in the endoplasmic reticulum. It localises to the golgi apparatus. The protein localises to the cytoskeleton. The protein resides in the microtubule organizing center. Its subcellular location is the centrosome. Functionally, adapter protein required for Golgi and endoplasmic reticulum biogenesis. Involved in Golgi and endoplasmic reticulum maintenance during interphase and in their reassembly at the end of mitosis. The complex formed with VCP has membrane fusion activity; membrane fusion activity requires USO1-GOLGA2 tethering and BET1L. VCPIP1 is also required, but not its deubiquitinating activity. Together with NSFL1C/p47, regulates the centrosomal levels of kinase AURKA/Aurora A during mitotic progression by promoting AURKA removal from centrosomes in prophase. Also, regulates spindle orientation during mitosis. This chain is UBX domain-containing protein 2B (UBXN2B), found in Homo sapiens (Human).